Consider the following 219-residue polypeptide: Transmembrane emp24 domain-containing protein 10 (219 aa).

The first 31 residues, methionine 1–alanine 31, serve as a signal peptide directing secretion. The interval methionine 1–glutamate 142 is required for interaction with STX17. Residues isoleucine 32–arginine 185 lie on the Lumenal side of the membrane. Positions arginine 41–serine 193 constitute a GOLD domain. The required for TMED10 and TMED2 cis-Golgi network localization stretch occupies residues leucine 147 to threonine 178. Arginine 171 and arginine 176 each carry dimethylated arginine. Residue asparagine 179 is glycosylated (N-linked (GlcNAc...) asparagine). Residues valine 186 to phenylalanine 206 traverse the membrane as a helical segment. Residues glutamine 204–glutamate 219 are interaction with COPG1. The Cytoplasmic segment spans residues tyrosine 207–glutamate 219. An interaction with ARF1 and IL1B region spans residues tyrosine 207–glutamate 219. Residues phenylalanine 211–phenylalanine 212 carry the COPII vesicle coat-binding motif. The short motif at phenylalanine 211 to glutamate 219 is the COPI vesicle coat-binding element.

The protein belongs to the EMP24/GP25L family. In terms of assembly, predominantly dimeric and to a lesser extent monomeric in the ER. Monomer and dimer in ERGIC and cis-Golgi network. Forms homooligomer (via GOLD domain); the assembly is promoted by direct binding with leaderless cargos and may form a protein channel that facilitates cargo entry into the ERGIC. Forms heterooligomeric complexes with other members of the p24 family such as TMED2, TMED7 and TMED9. Interacts (via GOLD domain) with TMED2 (via GOLD domain); the complex is required for export of TMED10 from the ER to the cis-Golgi network; the complex is proposed to be involved in cis-Golgi network dynamics and / or biogenesis. Associates with the COPI vesicle coat subunits (coatomer). Tetramerization of the cytoplasmic domain at the Golgi membrane in vitro; the complex is proposed to interact with COPI coatomer and induce budding of the vesicles. Interacts with COPG1; the interaction involves TMED10 homodimer. Interacts with ARF1 (GDP-bound); the interaction probably involves a TMED10 oligomer. Interacts with SEC23A, SEC24B, SEC24C and SEC24D components of the coat protein complex II/COPII, indicative of an association of TMED10 with the COPII vesicle coat. Interacts with CD59. Interacts with MPPE1/PGAP5; the complex might recruit and sort GPI-anchored proteins to the ER-exit site, or the interaction might lead to recycling of PGAP5 between the ER and the Golgi. Interacts with F2LR1/PAR2. Interacts with KDELR2/ERD2; the interaction is disrupted by KDELR2 ligand. Found in a complex composed at least of SURF4, TMED2 and TMED10. Associates with the presenilin-dependent gamma-secretase complex. Interacts with STX17; the interaction is direct. Interacts with IL-1; the interaction is direct. Interacts with RAB21 (active GTP-bound form); the interaction is indirect and regulates TMED10 abundance and localization at the Golgi.

It localises to the endoplasmic reticulum membrane. The protein resides in the endoplasmic reticulum-Golgi intermediate compartment membrane. The protein localises to the golgi apparatus membrane. Its subcellular location is the golgi apparatus. It is found in the cis-Golgi network membrane. It localises to the trans-Golgi network membrane. The protein resides in the cytoplasmic vesicle. The protein localises to the secretory vesicle membrane. Its subcellular location is the cell membrane. It is found in the melanosome. Functionally, cargo receptor involved in protein vesicular trafficking and quality control in the endoplasmic reticulum (ER) and Golgi. The p24 protein family is a group of transmembrane proteins that bind coat protein complex I/COPI and coat protein complex II/COPII involved in vesicular trafficking between the membranes. Acts at the lumenal side for incorporation of secretory cargo molecules into transport vesicles and involved in vesicle coat formation at the cytoplasmic side. Mainly functions in the early secretory pathway and cycles between the ER, ER-Golgi intermediate compartment (ERGIC) and Golgi, mediating cargo transport through COPI and COPII-coated vesicles. In COPII vesicle-mediated anterograde transport, involved in the transport of GPI-anchored proteins by acting together with TMED2 as their cargo receptor; the function specifically implies SEC24C and SEC24D of the COPII vesicle coat and lipid raft-like microdomains of the ER. Recognizes GPI anchors structural remodeled in the ER by the GPI inositol-deacylase/PGAP1 and the metallophosphoesterase MPPE1/PGAP5. In COPI vesicle-mediated retrograde transport, involved in the biogenesis of COPI vesicles and vesicle coat recruitment. Involved in trafficking of amyloid beta A4 protein and soluble APP-beta release (independent from the modulation of gamma-secretase activity). Involved in the KDELR2-mediated retrograde transport of the toxin A subunit (CTX-A-K63)together with COPI and the COOH terminus of KDELR2. On Golgi membranes, acts as a primary receptor for ARF1-GDP, a GTP-binding protein involved in COPI-vesicle formation. Increases coatomer-dependent GTPase-activating activity of ARFGAP2 which mediates the hydrolysis of ARF1-bound GTP and therefore modulates protein trafficking from the Golgi apparatus. Involved in the exocytic trafficking of G protein-coupled receptors F2LR1/PAR2 (trypsin and tryspin-like enzyme receptor), OPRM1 (opioid receptor) and P2RY4 (UTD and UDP receptor) from the Golgi to the plasma membrane, thus contributing to receptor resensitization. In addition to its cargo receptor activity, may also act as a protein channel after oligomerization, facilitating the post-translational entry of leaderless cytoplasmic cargo into the ERGIC. Involved in the translocation into ERGIC, the vesicle entry and the secretion of leaderless cargos (lacking the secretion signal sequence), including the mature form of interleukin 1/IL-1 family members, the alpha-crystallin B chain HSPB5, the carbohydrate-binding proteins galectin-1/LGALS1 and galectin-3/LGALS3, the microtubule-associated protein Tau/MAPT, and the annexin A1/ANXA1; the translocation process is dependent on cargo protein unfolding and enhanced by chaperones HSP90AB1 and HSP90B1/GRP9. Could also associates with the presenilin-dependent gamma-secretase complex in order to regulate gamma-cleavages of the amyloid beta A4 protein to yield amyloid-beta 40/Abeta40. This Oryctolagus cuniculus (Rabbit) protein is Transmembrane emp24 domain-containing protein 10 (TMED10).